Reading from the N-terminus, the 129-residue chain is Large ribosomal subunit protein mL53 (129 aa).

A mitochondrion-targeting transit peptide spans 1–50 (MREKLNLLAKLKSVVYKFDPLNPNTRSIRSFIPLTTCKRSRQLAPECSIS).

It belongs to the mitochondrion-specific ribosomal protein mL53 family.

The protein localises to the mitochondrion. This Dictyostelium discoideum (Social amoeba) protein is Large ribosomal subunit protein mL53 (mrpl53).